A 183-amino-acid chain; its full sequence is Adenine phosphoribosyltransferase (183 aa).

The protein belongs to the purine/pyrimidine phosphoribosyltransferase family. As to quaternary structure, homodimer.

It is found in the cytoplasm. It carries out the reaction AMP + diphosphate = 5-phospho-alpha-D-ribose 1-diphosphate + adenine. It functions in the pathway purine metabolism; AMP biosynthesis via salvage pathway; AMP from adenine: step 1/1. Its function is as follows. Catalyzes a salvage reaction resulting in the formation of AMP, that is energically less costly than de novo synthesis. The chain is Adenine phosphoribosyltransferase from Photorhabdus laumondii subsp. laumondii (strain DSM 15139 / CIP 105565 / TT01) (Photorhabdus luminescens subsp. laumondii).